We begin with the raw amino-acid sequence, 253 residues long: Chloride intracellular channel protein 4 (253 aa).

A2 bears the N-acetylalanine mark. The segment at 2-101 (ALSMPLNGLK…EEFLEEVLCP (100 aa)) is required for insertion into the membrane. Phosphoserine is present on S4. K24 carries the N6-acetyllysine modification. The helical transmembrane segment at 37 to 57 (FSQRLFMILWLKGVVFSVSTV) threads the bilayer. Positions 81-244 (NSEVKTDVNK…PSDKEVEIAY (164 aa)) constitute a GST C-terminal domain. N6-acetyllysine is present on K130. Phosphoserine occurs at positions 132, 167, and 236. The residue at position 244 (Y244) is a Phosphotyrosine.

This sequence belongs to the chloride channel CLIC family. As to quaternary structure, monomer. Interacts with HRH3.

The protein localises to the cytoplasm. Its subcellular location is the cytoskeleton. It is found in the microtubule organizing center. The protein resides in the centrosome. It localises to the cytoplasmic vesicle membrane. The protein localises to the nucleus. Its subcellular location is the cell membrane. It is found in the mitochondrion. The protein resides in the cell junction. It carries out the reaction chloride(in) = chloride(out). It catalyses the reaction thiocyanate(in) = thiocyanate(out). The enzyme catalyses nitrate(in) = nitrate(out). The catalysed reaction is iodide(out) = iodide(in). It carries out the reaction bromide(in) = bromide(out). It catalyses the reaction fluoride(in) = fluoride(out). The enzyme catalyses choline(out) = choline(in). In terms of biological role, in the soluble state, catalyzes glutaredoxin-like thiol disulfide exchange reactions with reduced glutathione as electron donor. Can insert into membranes and form voltage-dependent multi-ion conductive channels. Membrane insertion seems to be redox-regulated and may occur only under oxidizing conditions. Has alternate cellular functions like a potential role in angiogenesis or in maintaining apical-basolateral membrane polarity during mitosis and cytokinesis. Could also promote endothelial cell proliferation and regulate endothelial morphogenesis (tubulogenesis). Promotes cell-surface expression of HRH3. The chain is Chloride intracellular channel protein 4 (CLIC4) from Pongo abelii (Sumatran orangutan).